Here is a 248-residue protein sequence, read N- to C-terminus: MEADAPAGYRDPSGRHGAVTLPARPEPIAFDADTTVLIVVDMQNAYATKGGYLDLAGFDVSATGPVIERIAQAVAAARAAGIRVVWFQNGWDPDYVEAGGPGSPNWHKSNALKTMRRRPEMNQRLLAKGTWDYALVDALTPEPGDIVLPKPRYSGFYNTPLDSMLRARGIRTLVFTGIATNVCVESTLRDGYHREYFGIVLADATHQAGPPALQEGALRNIETFFGWVSDVAAFEAALSSDEARRIPA.

Asp41 acts as the Proton acceptor in catalysis. Lys150 is an active-site residue. The active-site Nucleophile is the Cys183.

This sequence belongs to the isochorismatase family. RutB subfamily.

The catalysed reaction is (Z)-3-ureidoacrylate + H2O + H(+) = (Z)-3-aminoacrylate + NH4(+) + CO2. It catalyses the reaction (Z)-3-ureidoacrylate + H2O = (Z)-3-aminoacrylate + carbamate + H(+). It carries out the reaction (Z)-2-methylureidoacrylate + H2O + H(+) = (Z)-2-methylaminoacrylate + NH4(+) + CO2. Functionally, hydrolyzes ureidoacrylate to form aminoacrylate and carbamate. The carbamate hydrolyzes spontaneously, thereby releasing one of the nitrogen atoms of the pyrimidine ring as ammonia and one of its carbon atoms as CO2. The polypeptide is Ureidoacrylate amidohydrolase RutB (Methylorubrum extorquens (strain CM4 / NCIMB 13688) (Methylobacterium extorquens)).